The chain runs to 345 residues: Dimethyladenosine transferase 1, mitochondrial (345 aa).

The transit peptide at 1-27 (MAASGKLGTFRLPPLPTIREIIKLFGL) directs the protein to the mitochondrion. S-adenosyl-L-methionine-binding positions include 35 to 38 (QNFL), asparagine 36, leucine 38, glycine 63, glutamate 85, aspartate 111, and asparagine 141.

It belongs to the class I-like SAM-binding methyltransferase superfamily. rRNA adenine N(6)-methyltransferase family. KsgA subfamily. Interacts with mitochondrial RNA polymerase POLRMT. Interacts with TFAM.

The protein resides in the mitochondrion. S-adenosyl-L-methionine-dependent methyltransferase which specifically dimethylates mitochondrial 12S rRNA at the conserved stem loop. Also required for basal transcription of mitochondrial DNA, probably via its interaction with POLRMT and TFAM. Stimulates transcription independently of the methyltransferase activity. The protein is Dimethyladenosine transferase 1, mitochondrial (Tfb1m) of Rattus norvegicus (Rat).